Reading from the N-terminus, the 262-residue chain is Protein Pcal_0062 (262 aa).

Belongs to the CinA family.

The polypeptide is Protein Pcal_0062 (Pyrobaculum calidifontis (strain DSM 21063 / JCM 11548 / VA1)).